The primary structure comprises 263 residues: Acetylglutamate kinase (263 aa).

Substrate-binding positions include 48 to 49, R70, and N162; that span reads GG.

This sequence belongs to the acetylglutamate kinase family. ArgB subfamily.

The protein localises to the cytoplasm. The catalysed reaction is N-acetyl-L-glutamate + ATP = N-acetyl-L-glutamyl 5-phosphate + ADP. It participates in amino-acid biosynthesis; L-arginine biosynthesis; N(2)-acetyl-L-ornithine from L-glutamate: step 2/4. Catalyzes the ATP-dependent phosphorylation of N-acetyl-L-glutamate. This is Acetylglutamate kinase from Shewanella sediminis (strain HAW-EB3).